Consider the following 544-residue polypeptide: Zinc finger protein 502 (544 aa).

Lys43 participates in a covalent cross-link: Glycyl lysine isopeptide (Lys-Gly) (interchain with G-Cter in SUMO2). 14 C2H2-type zinc fingers span residues 155-177, 183-205, 211-233, 239-261, 267-289, 295-317, 323-345, 351-373, 379-401, 407-429, 435-457, 463-485, 491-513, and 519-541; these read WKCN…QRTH, YTCE…QRIH, YGCE…QRIH, YKCN…QRIH, YICS…QRIH, HKCD…QRIH, YKCK…QRIH, YKCS…QRSH, YKCN…MRIH, YKCK…HRTH, YKCS…YRIH, and YECI…QKLH.

It belongs to the krueppel C2H2-type zinc-finger protein family. In terms of assembly, (Microbial infection) Interacts with human respiratory syncytial virus (HRSV) matrix protein; this interaction probably facilitates viral release.

It is found in the nucleus. May be involved in transcriptional regulation. The protein is Zinc finger protein 502 (ZNF502) of Homo sapiens (Human).